Consider the following 398-residue polypeptide: Succinyl-diaminopimelate desuccinylase (398 aa).

A Zn(2+)-binding site is contributed by H68. The active site involves D70. D101 contacts Zn(2+). E135 acts as the Proton acceptor in catalysis. Zn(2+) is bound by residues E136, E164, and H349.

This sequence belongs to the peptidase M20A family. DapE subfamily. As to quaternary structure, homodimer. The cofactor is Zn(2+). Requires Co(2+) as cofactor.

It catalyses the reaction N-succinyl-(2S,6S)-2,6-diaminopimelate + H2O = (2S,6S)-2,6-diaminopimelate + succinate. It participates in amino-acid biosynthesis; L-lysine biosynthesis via DAP pathway; LL-2,6-diaminopimelate from (S)-tetrahydrodipicolinate (succinylase route): step 3/3. In terms of biological role, catalyzes the hydrolysis of N-succinyl-L,L-diaminopimelic acid (SDAP), forming succinate and LL-2,6-diaminopimelate (DAP), an intermediate involved in the bacterial biosynthesis of lysine and meso-diaminopimelic acid, an essential component of bacterial cell walls. This is Succinyl-diaminopimelate desuccinylase from Wolbachia pipientis subsp. Culex pipiens (strain wPip).